The chain runs to 179 residues: Large ribosomal subunit protein uL5 (179 aa).

This sequence belongs to the universal ribosomal protein uL5 family. In terms of assembly, part of the 50S ribosomal subunit; part of the 5S rRNA/L5/L18/L25 subcomplex. Contacts the 5S rRNA and the P site tRNA. Forms a bridge to the 30S subunit in the 70S ribosome.

Its function is as follows. This is one of the proteins that bind and probably mediate the attachment of the 5S RNA into the large ribosomal subunit, where it forms part of the central protuberance. In the 70S ribosome it contacts protein S13 of the 30S subunit (bridge B1b), connecting the 2 subunits; this bridge is implicated in subunit movement. Contacts the P site tRNA; the 5S rRNA and some of its associated proteins might help stabilize positioning of ribosome-bound tRNAs. This chain is Large ribosomal subunit protein uL5, found in Solidesulfovibrio magneticus (strain ATCC 700980 / DSM 13731 / RS-1) (Desulfovibrio magneticus).